The chain runs to 246 residues: UDP-N-acetyl-D-mannosaminuronic acid transferase (246 aa).

It belongs to the glycosyltransferase 26 family.

The catalysed reaction is UDP-N-acetyl-alpha-D-mannosaminouronate + N-acetyl-alpha-D-glucosaminyl-di-trans,octa-cis-undecaprenyl diphosphate = beta-D-ManNAcA-(1-&gt;4)-alpha-D-GlcNAc-di-trans,octa-cis-undecaprenyl diphosphate + UDP + H(+). It participates in bacterial outer membrane biogenesis; enterobacterial common antigen biosynthesis. In terms of biological role, catalyzes the synthesis of Und-PP-GlcNAc-ManNAcA (Lipid II), the second lipid-linked intermediate involved in enterobacterial common antigen (ECA) synthesis. The sequence is that of UDP-N-acetyl-D-mannosaminuronic acid transferase from Escherichia coli O1:K1 / APEC.